The primary structure comprises 89 residues: Small ribosomal subunit protein uS15 (89 aa).

This sequence belongs to the universal ribosomal protein uS15 family. Part of the 30S ribosomal subunit. Forms a bridge to the 50S subunit in the 70S ribosome, contacting the 23S rRNA.

In terms of biological role, one of the primary rRNA binding proteins, it binds directly to 16S rRNA where it helps nucleate assembly of the platform of the 30S subunit by binding and bridging several RNA helices of the 16S rRNA. Its function is as follows. Forms an intersubunit bridge (bridge B4) with the 23S rRNA of the 50S subunit in the ribosome. In Bartonella henselae (strain ATCC 49882 / DSM 28221 / CCUG 30454 / Houston 1) (Rochalimaea henselae), this protein is Small ribosomal subunit protein uS15.